The primary structure comprises 382 residues: uncharacterized protein (382 aa).

A run of 12 helical transmembrane segments spans residues 8–28 (VMLL…LNTL), 45–65 (MVSS…GYLI), 75–95 (YLAS…VGFW), 102–122 (FIAG…LMCS), 131–151 (LLAA…LLVS), 157–177 (LLHV…PLLF), 204–224 (LGVN…GLMP), 231–251 (GMAN…GILG), 270–290 (VQVF…AMAP), 291–311 (ALFI…AWAC), 325–345 (ALLL…AMLM), and 349–369 (SDNL…LMLL).

It belongs to the major facilitator superfamily. YcaD (TC 2.A.1.26) family.

The protein resides in the cell inner membrane. This is an uncharacterized protein from Salmonella paratyphi B (strain ATCC BAA-1250 / SPB7).